The sequence spans 241 residues: Chalcone--flavanone isomerase C (241 aa).

Substrate contacts are provided by Thr-50, Asn-115, and Ser-192.

The protein belongs to the chalcone isomerase family.

It catalyses the reaction a chalcone = a flavanone.. The protein operates within secondary metabolite biosynthesis; flavonoid biosynthesis. In terms of biological role, catalyzes the intramolecular cyclization of bicyclic chalcones into tricyclic (S)-flavanones. Responsible for the isomerization of 4,2',4',6'-tetrahydroxychalcone (also termed chalcone) into naringenin. In Petunia hybrida (Petunia), this protein is Chalcone--flavanone isomerase C (CHI3).